Here is a 643-residue protein sequence, read N- to C-terminus: 1-deoxy-D-xylulose-5-phosphate synthase (643 aa).

Thiamine diphosphate contacts are provided by residues histidine 89 and 130-132; that span reads GHS. Aspartate 161 contacts Mg(2+). Thiamine diphosphate contacts are provided by residues 162 to 163, asparagine 190, phenylalanine 297, and glutamate 380; that span reads GA. Asparagine 190 is a Mg(2+) binding site.

It belongs to the transketolase family. DXPS subfamily. As to quaternary structure, homodimer. Mg(2+) serves as cofactor. The cofactor is thiamine diphosphate.

It catalyses the reaction D-glyceraldehyde 3-phosphate + pyruvate + H(+) = 1-deoxy-D-xylulose 5-phosphate + CO2. The protein operates within metabolic intermediate biosynthesis; 1-deoxy-D-xylulose 5-phosphate biosynthesis; 1-deoxy-D-xylulose 5-phosphate from D-glyceraldehyde 3-phosphate and pyruvate: step 1/1. Functionally, catalyzes the acyloin condensation reaction between C atoms 2 and 3 of pyruvate and glyceraldehyde 3-phosphate to yield 1-deoxy-D-xylulose-5-phosphate (DXP). This is 1-deoxy-D-xylulose-5-phosphate synthase from Hahella chejuensis (strain KCTC 2396).